The chain runs to 121 residues: Large ribosomal subunit protein mL52 (121 aa).

The N-terminal 22 residues, 1-22, are a transit peptide targeting the mitochondrion; it reads MAALGTWLSSVRRLHCSVVARA. The span at 98-109 shows a compositional bias: basic and acidic residues; that stretch reads QEERKKEHDLKP. The segment at 98-121 is disordered; sequence QEERKKEHDLKPKGTLLRSPLPNQ.

The protein belongs to the mitochondrion-specific ribosomal protein mL52 family. As to quaternary structure, component of the mitochondrial ribosome large subunit (39S) which comprises a 16S rRNA and about 50 distinct proteins.

Its subcellular location is the mitochondrion. The chain is Large ribosomal subunit protein mL52 (Mrpl52) from Mus musculus (Mouse).